Reading from the N-terminus, the 511-residue chain is 2-isopropylmalate synthase (511 aa).

Basic and acidic residues predominate over residues 1-16 (MTRKIDIFDTTLRDGE). Residues 1 to 23 (MTRKIDIFDTTLRDGEQSPGASM) are disordered. The 264-residue stretch at 5-268 (IDIFDTTLRD…HTDVVTQELT (264 aa)) folds into the Pyruvate carboxyltransferase domain. Mn(2+) contacts are provided by Asp14, His203, His205, and Asn239. Positions 392–511 (ALESVQVVCG…IQTTRSKQGK (120 aa)) are regulatory domain.

This sequence belongs to the alpha-IPM synthase/homocitrate synthase family. LeuA type 1 subfamily. In terms of assembly, homodimer. Mn(2+) serves as cofactor.

It is found in the cytoplasm. The catalysed reaction is 3-methyl-2-oxobutanoate + acetyl-CoA + H2O = (2S)-2-isopropylmalate + CoA + H(+). It functions in the pathway amino-acid biosynthesis; L-leucine biosynthesis; L-leucine from 3-methyl-2-oxobutanoate: step 1/4. Catalyzes the condensation of the acetyl group of acetyl-CoA with 3-methyl-2-oxobutanoate (2-ketoisovalerate) to form 3-carboxy-3-hydroxy-4-methylpentanoate (2-isopropylmalate). The polypeptide is 2-isopropylmalate synthase (Olsenella uli (strain ATCC 49627 / DSM 7084 / CCUG 31166 / CIP 109912 / JCM 12494 / LMG 11480 / NCIMB 702895 / VPI D76D-27C) (Lactobacillus uli)).